A 274-amino-acid chain; its full sequence is Cytochrome b-c1 complex subunit Rieske, mitochondrial (274 aa).

Residues 79 to 103 (SHTDIKVPDFSDYRRAEVLDSTKSS) are Mitochondrial matrix-facing. The helical transmembrane segment at 104–140 (KESSEARKGFSYLVTATTTVGVAYAAKNAVSQFVSSM) threads the bilayer. Residues 141-274 (SASADVLAMS…FTSGDVVVVG (134 aa)) lie on the Mitochondrial intermembrane side of the membrane. A Rieske domain is found at 187–272 (EAAVEVSQLR…YEFTSGDVVV (86 aa)). 5 residues coordinate [2Fe-2S] cluster: Cys217, His219, Cys236, His239, and Ser241. Residues Cys222 and Cys238 are joined by a disulfide bond.

Belongs to the Rieske iron-sulfur protein family. In terms of assembly, component of the ubiquinol-cytochrome c oxidoreductase (cytochrome b-c1 complex, complex III, CIII), a multisubunit enzyme composed of 11 subunits. The complex is composed of 3 respiratory subunits cytochrome b, cytochrome c1 and Rieske protein UQCRFS1, 2 core protein subunits UQCRC1/QCR1 and UQCRC2/QCR2, and 6 low-molecular weight protein subunits UQCRH/QCR6, UQCRB/QCR7, UQCRQ/QCR8, UQCR10/QCR9, UQCR11/QCR10 and subunit 9, the cleavage product of Rieske protein UQCRFS1. The complex exists as an obligatory dimer and forms supercomplexes (SCs) in the inner mitochondrial membrane with NADH-ubiquinone oxidoreductase (complex I, CI) and cytochrome c oxidase (complex IV, CIV), resulting in different assemblies (supercomplex SCI(1)III(2)IV(1) and megacomplex MCI(2)III(2)IV(2)). Incorporation of the Rieske protein UQCRFS1 is the penultimate step in complex III assembly. Interacts with TTC19, which is involved in the clearance of UQCRFS1 fragments. As to quaternary structure, component of the ubiquinol-cytochrome c oxidoreductase (cytochrome b-c1 complex, complex III, CIII). Subunit 9 corresponds to the mitochondrial targeting sequence (MTS) of Rieske protein UQCRFS1. It is retained after processing and incorporated inside complex III, where it remains bound to the complex and localizes between the 2 core subunits UQCRC1/QCR1 and UQCRC2/QCR2. [2Fe-2S] cluster is required as a cofactor. Post-translationally, proteolytic processing is necessary for the correct insertion of UQCRFS1 in the complex III dimer. Several fragments are generated during UQCRFS1 insertion, most probably due to the endogenous matrix-processing peptidase (MPP) activity of the 2 core protein subunits UQCRC1/QCR1 and UQCRC2/QCR2, which are homologous to the 2 mitochondrial-processing peptidase (MPP) subunits beta-MPP and alpha-MPP respectively. The action of the protease is also necessary for the clearance of the UQCRFS1 fragments.

It localises to the mitochondrion inner membrane. The enzyme catalyses a quinol + 2 Fe(III)-[cytochrome c](out) = a quinone + 2 Fe(II)-[cytochrome c](out) + 2 H(+)(out). Functionally, component of the ubiquinol-cytochrome c oxidoreductase, a multisubunit transmembrane complex that is part of the mitochondrial electron transport chain which drives oxidative phosphorylation. The respiratory chain contains 3 multisubunit complexes succinate dehydrogenase (complex II, CII), ubiquinol-cytochrome c oxidoreductase (cytochrome b-c1 complex, complex III, CIII) and cytochrome c oxidase (complex IV, CIV), that cooperate to transfer electrons derived from NADH and succinate to molecular oxygen, creating an electrochemical gradient over the inner membrane that drives transmembrane transport and the ATP synthase. The cytochrome b-c1 complex catalyzes electron transfer from ubiquinol to cytochrome c, linking this redox reaction to translocation of protons across the mitochondrial inner membrane, with protons being carried across the membrane as hydrogens on the quinol. In the process called Q cycle, 2 protons are consumed from the matrix, 4 protons are released into the intermembrane space and 2 electrons are passed to cytochrome c. The Rieske protein is a catalytic core subunit containing a [2Fe-2S] iron-sulfur cluster. It cycles between 2 conformational states during catalysis to transfer electrons from the quinol bound in the Q(0) site in cytochrome b to cytochrome c1. Incorporation of UQCRFS1 is the penultimate step in complex III assembly. In terms of biological role, component of the ubiquinol-cytochrome c oxidoreductase (cytochrome b-c1 complex, complex III, CIII). UQCRFS1 undergoes proteolytic processing once it is incorporated in the complex III dimer. One of the fragments, called subunit 9, corresponds to its mitochondrial targeting sequence (MTS). The proteolytic processing is necessary for the correct insertion of UQCRFS1 in the complex III dimer, but the persistence of UQCRFS1-derived fragments may prevent newly imported UQCRFS1 to be processed and assembled into complex III and is detrimental for the complex III structure and function. This chain is Cytochrome b-c1 complex subunit Rieske, mitochondrial (Uqcrfs1), found in Rattus norvegicus (Rat).